The sequence spans 208 residues: Outer-membrane lipoprotein carrier protein (208 aa).

An N-terminal signal peptide occupies residues 1–22 (MKNLLCAVMLTSPLLYSTAVFA).

This sequence belongs to the LolA family. Monomer.

It is found in the periplasm. Functionally, participates in the translocation of lipoproteins from the inner membrane to the outer membrane. Only forms a complex with a lipoprotein if the residue after the N-terminal Cys is not an aspartate (The Asp acts as a targeting signal to indicate that the lipoprotein should stay in the inner membrane). This chain is Outer-membrane lipoprotein carrier protein, found in Shewanella sp. (strain W3-18-1).